The primary structure comprises 272 residues: Undecaprenyl-diphosphatase (272 aa).

The next 8 helical transmembrane spans lie at 1–21 (MSYLEAIILGLVQGLTEFLPI), 38–58 (PGATFTAITQLGTELAVVVFF), 84–104 (VRMGWLVIIGTIPIGIAGYLF), 112–132 (FRSLWIVAIVLIVFGILLGLA), 145–165 (MTYGHGVSIGIAQALALVPGV), 183–203 (PVAAEYSFLLAVPAVFGSGLY), 219–239 (QTAVATLIAFIVGLAVIAGLM), and 250–270 (FVVYRVALGVVLLVLLGTGAI).

This sequence belongs to the UppP family.

It localises to the cell membrane. It catalyses the reaction di-trans,octa-cis-undecaprenyl diphosphate + H2O = di-trans,octa-cis-undecaprenyl phosphate + phosphate + H(+). Catalyzes the dephosphorylation of undecaprenyl diphosphate (UPP). Confers resistance to bacitracin. This Clavibacter michiganensis subsp. michiganensis (strain NCPPB 382) protein is Undecaprenyl-diphosphatase.